Here is a 60-residue protein sequence, read N- to C-terminus: Large ribosomal subunit protein bL32 (60 aa).

The span at 1 to 16 (MAVPRRKTSPSRRGMR) shows a compositional bias: basic residues. The tract at residues 1-60 (MAVPRRKTSPSRRGMRRSADAIKRPTYVEDKDSGELRRPHHLDLKTGMYKGRQVLKKKDS) is disordered. Positions 17–44 (RSADAIKRPTYVEDKDSGELRRPHHLDL) are enriched in basic and acidic residues.

The protein is Large ribosomal subunit protein bL32 of Rhodopseudomonas palustris (strain ATCC BAA-98 / CGA009).